A 736-amino-acid polypeptide reads, in one-letter code: Phosphoribosylformylglycinamidine synthase subunit PurL (736 aa).

Residue histidine 50 is part of the active site. Residues tyrosine 53 and lysine 92 each coordinate ATP. Glutamate 94 contacts Mg(2+). Residues 95 to 98 (SHNH) and arginine 117 contribute to the substrate site. Histidine 96 functions as the Proton acceptor in the catalytic mechanism. Residue aspartate 118 participates in Mg(2+) binding. Glutamine 241 provides a ligand contact to substrate. Aspartate 269 is a binding site for Mg(2+). 313–315 (ESQ) provides a ligand contact to substrate. ATP is bound by residues aspartate 495 and glycine 532. Position 533 (asparagine 533) interacts with Mg(2+). Position 535 (serine 535) interacts with substrate.

It belongs to the FGAMS family. Monomer. Part of the FGAM synthase complex composed of 1 PurL, 1 PurQ and 2 PurS subunits.

It localises to the cytoplasm. It catalyses the reaction N(2)-formyl-N(1)-(5-phospho-beta-D-ribosyl)glycinamide + L-glutamine + ATP + H2O = 2-formamido-N(1)-(5-O-phospho-beta-D-ribosyl)acetamidine + L-glutamate + ADP + phosphate + H(+). Its pathway is purine metabolism; IMP biosynthesis via de novo pathway; 5-amino-1-(5-phospho-D-ribosyl)imidazole from N(2)-formyl-N(1)-(5-phospho-D-ribosyl)glycinamide: step 1/2. Part of the phosphoribosylformylglycinamidine synthase complex involved in the purines biosynthetic pathway. Catalyzes the ATP-dependent conversion of formylglycinamide ribonucleotide (FGAR) and glutamine to yield formylglycinamidine ribonucleotide (FGAM) and glutamate. The FGAM synthase complex is composed of three subunits. PurQ produces an ammonia molecule by converting glutamine to glutamate. PurL transfers the ammonia molecule to FGAR to form FGAM in an ATP-dependent manner. PurS interacts with PurQ and PurL and is thought to assist in the transfer of the ammonia molecule from PurQ to PurL. This Bartonella tribocorum (strain CIP 105476 / IBS 506) protein is Phosphoribosylformylglycinamidine synthase subunit PurL.